Here is a 414-residue protein sequence, read N- to C-terminus: 2,3-diketo-5-methylthiopentyl-1-phosphate enolase (414 aa).

The active-site Proton acceptor is Lys-99. Substrate-binding positions include Lys-148, Lys-174–Glu-177, His-265, Gly-338, and Gly-360–Gly-361. Mg(2+) contacts are provided by Lys-174, Asp-176, and Glu-177. Lys-174 bears the N6-carboxylysine mark.

Belongs to the RuBisCO large chain family. Type IV subfamily. Homodimer. It depends on Mg(2+) as a cofactor.

The catalysed reaction is 5-methylsulfanyl-2,3-dioxopentyl phosphate = 2-hydroxy-5-methylsulfanyl-3-oxopent-1-enyl phosphate. It participates in amino-acid biosynthesis; L-methionine biosynthesis via salvage pathway; L-methionine from S-methyl-5-thio-alpha-D-ribose 1-phosphate: step 3/6. In terms of biological role, catalyzes the enolization of 2,3-diketo-5-methylthiopentyl-1-phosphate (DK-MTP-1-P) into 2-hydroxy-3-keto-5-methylthiopentenyl-1-phosphate (HK-MTPenyl-1-P). The polypeptide is 2,3-diketo-5-methylthiopentyl-1-phosphate enolase (Bacillus cereus (strain ZK / E33L)).